Here is a 278-residue protein sequence, read N- to C-terminus: Juvenile hormone acid O-methyltransferase (278 aa).

This sequence belongs to the methyltransferase superfamily. Specifically expressed in the corpora allata (CA).

It carries out the reaction (2E,6E)-farnesoate + S-adenosyl-L-methionine = methyl (2E,6E)-farnesoate + S-adenosyl-L-homocysteine. The enzyme catalyses juvenile hormone III carboxylate + S-adenosyl-L-methionine = juvenile hormone III + S-adenosyl-L-homocysteine. In terms of biological role, O-methyltransferase that transfers a methyl group from S-adenosyl-L-methionine (SAM) to the carboxyl group of juvenile hormone acids to produce active juvenile hormones in the corpora allata, the last step during juvenile hormone biosynthesis. Also able to methylate farnesoate to methyl farnesoate. The protein is Juvenile hormone acid O-methyltransferase of Bombyx mori (Silk moth).